We begin with the raw amino-acid sequence, 98 residues long: MALTKAEMAEHLFETLGINKRVAKEMVESFFEEIRGALESGEQVKLSGFGNFDLRDKNQRPGRNPKTGEDIPISARRVVTFRPGQKLKTRVEAANAGK.

Positions 49 to 71 are disordered; sequence FGNFDLRDKNQRPGRNPKTGEDI.

The protein belongs to the bacterial histone-like protein family. In terms of assembly, heterodimer of an alpha and a beta chain.

Its function is as follows. This protein is one of the two subunits of integration host factor, a specific DNA-binding protein that functions in genetic recombination as well as in transcriptional and translational control. The sequence is that of Integration host factor subunit alpha from Shewanella sp. (strain ANA-3).